We begin with the raw amino-acid sequence, 281 residues long: Tetraspanin-33 (281 aa).

The Cytoplasmic segment spans residues 1–23 (MGNAKRATQNDEDYTFVSPVVKY). The chain crosses the membrane as a helical span at residues 24–44 (LLFFFNMIFWIISLVLISIGV). The Extracellular portion of the chain corresponds to 45-62 (YSRIVKHETALACLTVDP). Residues 63 to 83 (ALILMVVGILMFFITFCGCVG) form a helical membrane-spanning segment. Topologically, residues 84-94 (SLRENICLLQT) are cytoplasmic. A helical transmembrane segment spans residues 95 to 115 (FCIFLTIMFLLQLLAGVLGFV). Topologically, residues 116–233 (FSDKARGKVT…DILVNWIHSN (118 aa)) are extracellular. 4 disulfide bridges follow: Cys-154-Cys-222, Cys-155-Cys-187, Cys-171-Cys-181, and Cys-188-Cys-201. Asn-170 carries an N-linked (GlcNAc...) asparagine glycan. The chain crosses the membrane as a helical span at residues 234 to 254 (LFLLGGIALGLTIPQLVGILL). Topologically, residues 255–281 (SQVLINQIQDQIKLQNYNQQHRSDPWS) are cytoplasmic.

It belongs to the tetraspanin (TM4SF) family. Homodimer; disulfide-linked.

The protein localises to the cell membrane. It localises to the cell junction. The protein resides in the adherens junction. It is found in the cytoplasm. Functionally, part of TspanC8 subgroup, composed of 6 members that interact with the transmembrane metalloprotease ADAM10. This interaction is required for ADAM10 exit from the endoplasmic reticulum and for enzymatic maturation and trafficking to the cell surface as well as substrate specificity. Different TspanC8/ADAM10 complexes have distinct substrates. This chain is Tetraspanin-33 (tspan33), found in Danio rerio (Zebrafish).